Consider the following 449-residue polypeptide: Chromosomal replication initiator protein DnaA (449 aa).

The domain I, interacts with DnaA modulators stretch occupies residues 1–73 (MDADLKNLWD…ANSIKAVCSK (73 aa)). The domain II stretch occupies residues 73–110 (KLYTIEFIIMSEIYEKEEIKSSSNQKSKAIVVNDEMSS). The interval 111-327 (TLNPKYTFNS…GALIRIIAYS (217 aa)) is domain III, AAA+ region. ATP contacts are provided by G155, G157, K158, and T159. Residues 328 to 449 (SLTNREVTVD…NDITKKLTQN (122 aa)) form a domain IV, binds dsDNA region.

Belongs to the DnaA family. In terms of assembly, oligomerizes as a right-handed, spiral filament on DNA at oriC.

Its subcellular location is the cytoplasm. Functionally, plays an essential role in the initiation and regulation of chromosomal replication. ATP-DnaA binds to the origin of replication (oriC) to initiate formation of the DNA replication initiation complex once per cell cycle. Binds the DnaA box (a 9 base pair repeat at the origin) and separates the double-stranded (ds)DNA. Forms a right-handed helical filament on oriC DNA; dsDNA binds to the exterior of the filament while single-stranded (ss)DNA is stabiized in the filament's interior. The ATP-DnaA-oriC complex binds and stabilizes one strand of the AT-rich DNA unwinding element (DUE), permitting loading of DNA polymerase. After initiation quickly degrades to an ADP-DnaA complex that is not apt for DNA replication. Binds acidic phospholipids. The polypeptide is Chromosomal replication initiator protein DnaA (Clostridium beijerinckii (strain ATCC 51743 / NCIMB 8052) (Clostridium acetobutylicum)).